The sequence spans 370 residues: MPPRIIILGAGIIGLSTAVELQQRHQHRSAEPRPSITIVSAELPSQPSEWTEDPRCRPSPDYASMWAGAHYRPIPGATPQLQREAQWAMDTFRRMRRIARDAPEAGVRMMPGIEYLEDSPKEYGRLRTGDRYAGEHDEFRVLDKAELPEGVAWGCRYQTYSLNAPHYSRWLLDRFLAGGGQIVHRKLERLEEAFTLFEDGSQPLVINCTGRNFDQDDKMRIIRGQTVLVRNQFDRTITRQNRDGSWIFLIPRPFAGTIIGGTKEPGDMEVKPRMETRLKLLENCVRAFPEFVDRLEDFDVVLDNVGRRPWRDGGLRLEEERIEDGKTVIHAYGAGGRGYELSWGIAKEVADLVLATERSKFECRVSENLK.

The N-terminal stretch at M1–A18 is a signal peptide. I13, E42, A63, S64, and G68 together coordinate FAD. Residue N207 is glycosylated (N-linked (GlcNAc...) asparagine). The FAD site is built by R308, G338, and Y339.

It belongs to the DAMOX/DASOX family. In terms of assembly, monomer. FAD serves as cofactor.

It catalyses the reaction D-aspartate + O2 + H2O = oxaloacetate + H2O2 + NH4(+). It carries out the reaction D-glutamate + O2 + H2O = H2O2 + 2-oxoglutarate + NH4(+). Selectively catalyzes the oxidative deamination of acidic amino acids. Protects the organism from the toxicity of D-amino acids. Enables the organism to utilize D-amino acids as a source of nutrients. The sequence is that of D-aspartate oxidase from Talaromyces thermophilus.